Reading from the N-terminus, the 1505-residue chain is Phosphatidylinositol 3-kinase C2 domain-containing subunit gamma (1505 aa).

The tract at residues 1–32 (MAYNWQTEPNRAEPQEGGHDHQQCHHADQHLS) is disordered. The segment covering 10-31 (NRAEPQEGGHDHQQCHHADQHL) has biased composition (basic and acidic residues). The PI3K-RBD domain occupies 278-370 (PSRLFADTQF…IQLHLQRSRD (93 aa)). The C2 PI3K-type domain occupies 540–688 (LHSHLSFTVC…TPLTLQIDFP (149 aa)). In terms of domain architecture, PIK helical spans 703–879 (RTDHQEPPRE…QELLAALQFC (177 aa)). In terms of domain architecture, PI3K/PI4K catalytic spans 948–1226 (DRDACSYFTS…KIKQSLECFP (279 aa)). The G-loop stretch occupies residues 954–960 (YFTSNAL). Positions 1090–1098 (GVCDRHNDN) are catalytic loop. The activation loop stretch occupies residues 1109-1135 (HIDFGKFLGHAQTFGGIKRDRAPFIFT). One can recognise a PX domain in the interval 1259-1371 (LNKTRTIQRV…SFFLSEHIQQ (113 aa)). The C2 domain occupies 1384-1505 (HSPDKSPQVQ…KWYPLGNSII (122 aa)).

Belongs to the PI3/PI4-kinase family. In terms of tissue distribution, predominantly expressed in normal liver. High levels also found in regenerating liver. Very low levels found in heart and testis.

The protein resides in the membrane. It carries out the reaction a 1,2-diacyl-sn-glycero-3-phospho-(1D-myo-inositol) + ATP = a 1,2-diacyl-sn-glycero-3-phospho-(1D-myo-inositol-3-phosphate) + ADP + H(+). The enzyme catalyses a 1,2-diacyl-sn-glycero-3-phospho-(1D-myo-inositol 4-phosphate) + ATP = a 1,2-diacyl-sn-glycero-3-phospho-(1D-myo-inositol-3,4-bisphosphate) + ADP + H(+). In terms of biological role, generates phosphatidylinositol 3-phosphate (PtdIns3P) and phosphatidylinositol 3,4-bisphosphate (PtdIns(3,4)P2) that act as second messengers. May play a role in SDF1A-stimulated chemotaxis. This is Phosphatidylinositol 3-kinase C2 domain-containing subunit gamma (Pik3c2g) from Rattus norvegicus (Rat).